The sequence spans 557 residues: Ribonuclease J 2 (557 aa).

Zn(2+) contacts are provided by H76, H78, H144, and E166. Residue 366–370 (HASSH) participates in substrate binding.

The protein belongs to the metallo-beta-lactamase superfamily. RNA-metabolizing metallo-beta-lactamase-like family. Bacterial RNase J subfamily. As to quaternary structure, homodimer, may be a subunit of the RNA degradosome. It depends on Zn(2+) as a cofactor.

The protein localises to the cytoplasm. In terms of biological role, an RNase that has 5'-3' exonuclease and possibly endoonuclease activity. Involved in maturation of rRNA and in some organisms also mRNA maturation and/or decay. The chain is Ribonuclease J 2 from Staphylococcus epidermidis (strain ATCC 35984 / DSM 28319 / BCRC 17069 / CCUG 31568 / BM 3577 / RP62A).